Consider the following 214-residue polypeptide: Adenylate kinase (214 aa).

Residue 14-19 (GSGKGT) participates in ATP binding. The interval 34 to 63 (SSGDLFRSAIKSATPLGSKAAEYINKGLLV) is NMP. AMP contacts are provided by residues Ser-35, Arg-40, 61–63 (LLV), 89–92 (GFPR), and Gln-96. Positions 130-163 (SRFICPACNYVYNQSQGFKECPTCHVALIRRSDD) are LID. ATP is bound at residue Arg-131. Zn(2+) is bound by residues Cys-134 and Cys-137. 140–141 (VY) contacts ATP. Positions 150 and 153 each coordinate Zn(2+). AMP contacts are provided by Arg-160 and Arg-171. Residue Thr-199 coordinates ATP.

This sequence belongs to the adenylate kinase family. As to quaternary structure, monomer.

It is found in the cytoplasm. The enzyme catalyses AMP + ATP = 2 ADP. It functions in the pathway purine metabolism; AMP biosynthesis via salvage pathway; AMP from ADP: step 1/1. Catalyzes the reversible transfer of the terminal phosphate group between ATP and AMP. Plays an important role in cellular energy homeostasis and in adenine nucleotide metabolism. This Chlamydia caviae (strain ATCC VR-813 / DSM 19441 / 03DC25 / GPIC) (Chlamydophila caviae) protein is Adenylate kinase.